The chain runs to 106 residues: ATP-dependent Clp protease adapter protein ClpS (106 aa).

Residues 1-20 (MKVDMSTSVKDDAQLEASRV) are disordered.

Belongs to the ClpS family. In terms of assembly, binds to the N-terminal domain of the chaperone ClpA.

Its function is as follows. Involved in the modulation of the specificity of the ClpAP-mediated ATP-dependent protein degradation. This is ATP-dependent Clp protease adapter protein ClpS from Chromobacterium violaceum (strain ATCC 12472 / DSM 30191 / JCM 1249 / CCUG 213 / NBRC 12614 / NCIMB 9131 / NCTC 9757 / MK).